The chain runs to 424 residues: GTPase Obg (424 aa).

One can recognise an Obg domain in the interval 1-158 (MFYDQAKIYV…RNLLLELKLL (158 aa)). The OBG-type G domain occupies 159–329 (ADVGLVGFPN…LVYAAAKALP (171 aa)). GTP contacts are provided by residues 165 to 172 (GFPNVGKS), 190 to 194 (FTTLV), 212 to 215 (DIPG), 282 to 285 (NKMD), and 310 to 312 (SAA). Positions 172 and 192 each coordinate Mg(2+). One can recognise an OCT domain in the interval 347 to 424 (TQASAPHRFE…IAGIEFEWEE (78 aa)).

Belongs to the TRAFAC class OBG-HflX-like GTPase superfamily. OBG GTPase family. Monomer. Mg(2+) is required as a cofactor.

The protein localises to the cytoplasm. In terms of biological role, an essential GTPase which binds GTP, GDP and possibly (p)ppGpp with moderate affinity, with high nucleotide exchange rates and a fairly low GTP hydrolysis rate. Plays a role in control of the cell cycle, stress response, ribosome biogenesis and in those bacteria that undergo differentiation, in morphogenesis control. The sequence is that of GTPase Obg from Desulfitobacterium hafniense (strain DSM 10664 / DCB-2).